The chain runs to 430 residues: Ribosomal protein uS12 methylthiotransferase RimO (430 aa).

One can recognise an MTTase N-terminal domain in the interval 2 to 118 (AKIFTISLGC…IDNVIKRPKH (117 aa)). C11, C47, C81, C150, C154, and C157 together coordinate [4Fe-4S] cluster. A Radical SAM core domain is found at 136-368 (LTAPHSAYLK…AQSRVIDSIN (233 aa)). A TRAM domain is found at 369 to 430 (RKLKGKTVKV…KGYNRTGKII (62 aa)).

The protein belongs to the methylthiotransferase family. RimO subfamily. The cofactor is [4Fe-4S] cluster.

Its subcellular location is the cytoplasm. The enzyme catalyses L-aspartate(89)-[ribosomal protein uS12]-hydrogen + (sulfur carrier)-SH + AH2 + 2 S-adenosyl-L-methionine = 3-methylsulfanyl-L-aspartate(89)-[ribosomal protein uS12]-hydrogen + (sulfur carrier)-H + 5'-deoxyadenosine + L-methionine + A + S-adenosyl-L-homocysteine + 2 H(+). In terms of biological role, catalyzes the methylthiolation of an aspartic acid residue of ribosomal protein uS12. This is Ribosomal protein uS12 methylthiotransferase RimO from Elusimicrobium minutum (strain Pei191).